The chain runs to 424 residues: Histidine--tRNA ligase (424 aa).

Belongs to the class-II aminoacyl-tRNA synthetase family. In terms of assembly, homodimer.

The protein resides in the cytoplasm. It catalyses the reaction tRNA(His) + L-histidine + ATP = L-histidyl-tRNA(His) + AMP + diphosphate + H(+). The sequence is that of Histidine--tRNA ligase from Salmonella dublin (strain CT_02021853).